Reading from the N-terminus, the 383-residue chain is ATP phosphoribosyltransferase regulatory subunit (383 aa).

It belongs to the class-II aminoacyl-tRNA synthetase family. HisZ subfamily. In terms of assembly, heteromultimer composed of HisG and HisZ subunits.

The protein localises to the cytoplasm. It functions in the pathway amino-acid biosynthesis; L-histidine biosynthesis; L-histidine from 5-phospho-alpha-D-ribose 1-diphosphate: step 1/9. Its function is as follows. Required for the first step of histidine biosynthesis. May allow the feedback regulation of ATP phosphoribosyltransferase activity by histidine. The sequence is that of ATP phosphoribosyltransferase regulatory subunit from Chromobacterium violaceum (strain ATCC 12472 / DSM 30191 / JCM 1249 / CCUG 213 / NBRC 12614 / NCIMB 9131 / NCTC 9757 / MK).